The sequence spans 294 residues: MGDYLVKALAYNGQVRAYAARTTETVAEAQRRHQTWPTASAALGRALTAGVMMGAMLKGEETLTIKIDGGGPIGVILVDSNARGEVRGYVTNPHVHFELNEHGKLDVARAVGKNGMLTVVKDLGLRDFFTGQVPLISGELGDDFTYYFASSEQIPSSVGVGVLVNPDHTIRAAGGFIIQLMPGTEENTITRIEERLKQIPPVSRMIERGLSPEQLLEQLLGDGGVRVLETMPVSFVCRCSRERIADALISLGPEEIQDIIDKEGQAEASCHFCNETYHFDKAELEQLKQLAKKE.

Cystine bridges form between cysteine 237–cysteine 239 and cysteine 270–cysteine 273.

Belongs to the HSP33 family. Under oxidizing conditions two disulfide bonds are formed involving the reactive cysteines. Under reducing conditions zinc is bound to the reactive cysteines and the protein is inactive.

The protein resides in the cytoplasm. Redox regulated molecular chaperone. Protects both thermally unfolding and oxidatively damaged proteins from irreversible aggregation. Plays an important role in the bacterial defense system toward oxidative stress. The sequence is that of 33 kDa chaperonin from Geobacillus kaustophilus (strain HTA426).